Here is a 326-residue protein sequence, read N- to C-terminus: N-acetyl-gamma-glutamyl-phosphate reductase (326 aa).

The active site involves C155.

Belongs to the NAGSA dehydrogenase family. Type 1 subfamily.

It localises to the cytoplasm. The enzyme catalyses N-acetyl-L-glutamate 5-semialdehyde + phosphate + NADP(+) = N-acetyl-L-glutamyl 5-phosphate + NADPH + H(+). Its pathway is amino-acid biosynthesis; L-arginine biosynthesis; N(2)-acetyl-L-ornithine from L-glutamate: step 3/4. Catalyzes the NADPH-dependent reduction of N-acetyl-5-glutamyl phosphate to yield N-acetyl-L-glutamate 5-semialdehyde. The sequence is that of N-acetyl-gamma-glutamyl-phosphate reductase from Shewanella baltica (strain OS223).